Consider the following 407-residue polypeptide: WEB family protein At3g51720 (407 aa).

3 coiled-coil regions span residues 72–99 (KVLK…DKEN), 128–217 (SVGL…ARAA), and 247–278 (EEIL…EAEE).

This sequence belongs to the WEB family.

The chain is WEB family protein At3g51720 from Arabidopsis thaliana (Mouse-ear cress).